Reading from the N-terminus, the 108-residue chain is UPF0145 protein Ava_0420 (108 aa).

It belongs to the UPF0145 family.

The chain is UPF0145 protein Ava_0420 from Trichormus variabilis (strain ATCC 29413 / PCC 7937) (Anabaena variabilis).